Consider the following 286-residue polypeptide: Versiconal hemiacetal acetate esterase stcI (286 aa).

Positions His-54 to Gly-56 match the Involved in the stabilization of the negatively charged intermediate by the formation of the oxyanion hole motif. Residues Ser-123, Asp-226, and His-256 contribute to the active site.

It belongs to the 'GDXG' lipolytic enzyme family.

It carries out the reaction (2S,3S)-versiconal hemiacetal acetate + H2O = (2S-3S)-versiconal hemiacetal + acetate + H(+). The enzyme catalyses (3S)-versiconol acetate + H2O = (S)-versiconol + acetate + H(+). It functions in the pathway mycotoxin biosynthesis; sterigmatocystin biosynthesis. In terms of biological role, esterase; part of the gene cluster that mediates the biosynthesis of sterigmatocystin (ST), a polyketide-derived furanocoumarin which is part of the most toxic and carcinogenic compounds among the known mycotoxins. The first step in the biosynthesis of sterigmatocystin is the production of hexanoate by the fatty acid synthase (FAS) units stcJ and stcK. The polyketide backbone is assembled by the non-reducing polyketide synthase stcA by condensation of the starter hexanoyl-CoA and 7 malonyl-CoA extender units followed by cyclization and release of norsolorinic acid. Norsolorinic acid is the first stable intermediate in the biosynthesis of sterigmatocystin and is converted into averantin (AVN) by the ketoreductase stcE which reduces the hexanoate ketone to an alcohol. Averantin is then oxidized into 5'-hydroxyaverantin (HAVN) by the cytochrome P450 monooxygenase stcF. 5'-hydroxyaverantin is further converted to 5'-oxyaverantin (OAVN) by the 5'-hydroxyaverantin dehydrogenase stcG. The next step is the conversion of OAVN into averufin (AVF) which is catalyzed by a yet to be identified enzyme. The cytochrome P450 monooxygenase stcB and the flavin-binding monooxygenase stcW are both required for the conversion of averufin to 1-hydroxyversicolorone. The esterase stcI probably catalyzes the formation of versiconal hemiacetal acetate from 1-hydroxyversicolorone. The oxydoreductase stcN then probably catalyzes the biosynthetic step from versiconal to versicolorin B (VERB). The next step is performed by the versicolorin B desaturase stcL to produce versicolorin A (VERA). The ketoreductase stcU and the cytochrome P450 monooxygenase stcS are involved in the conversion of versicolorin A to demethylsterigmatocystin. The Baeyer-Villiger oxidas stcQ and the reductase stcR might be involved in the biosynthetic step from versicolorin A to demethylsterigmatocystin. The final step in the biosynthesis of sterigmatocystin is the methylation of demethylsterigmatocystin catalyzed by the methyltransferase stcP. This Emericella nidulans (strain FGSC A4 / ATCC 38163 / CBS 112.46 / NRRL 194 / M139) (Aspergillus nidulans) protein is Versiconal hemiacetal acetate esterase stcI.